The sequence spans 148 residues: KLKASDSRSFLDPMPEGVPLSELELDKDEKFSTMEEERRKLIAEDREGNATRIAELEVAMNEHSHELAKLKASDSRSFLDPMPEGVPLSELELDKDEKFSTMEEERRKLIAEDREGNAARIAELEVAMNEHSHELAKLKASDSRSFQS.

Positions 1–22 are disordered; sequence KLKASDSRSFLDPMPEGVPLSE. A run of 2 repeats spans residues 1–68 and 69–136. The stretch at 137 to 148 is one 3; truncated repeat; that stretch reads KLKASDSRSFQS.

Its subcellular location is the cytoplasm. It is found in the cytoskeleton. This chain is Antigen GM6 (GM6), found in Trypanosoma brucei gambiense.